The following is a 346-amino-acid chain: tRNA pseudouridine synthase D (346 aa).

The active-site Nucleophile is the Asp-83. A TRUD domain is found at 159–305; that stretch reads GVPNYFGEQR…LKQERRALRV (147 aa).

This sequence belongs to the pseudouridine synthase TruD family.

The enzyme catalyses uridine(13) in tRNA = pseudouridine(13) in tRNA. Its function is as follows. Responsible for synthesis of pseudouridine from uracil-13 in transfer RNAs. This Hydrogenovibrio crunogenus (strain DSM 25203 / XCL-2) (Thiomicrospira crunogena) protein is tRNA pseudouridine synthase D.